A 372-amino-acid chain; its full sequence is Lipid-A-disaccharide synthase (372 aa).

Belongs to the LpxB family.

It catalyses the reaction a lipid X + a UDP-2-N,3-O-bis[(3R)-3-hydroxyacyl]-alpha-D-glucosamine = a lipid A disaccharide + UDP + H(+). Its pathway is bacterial outer membrane biogenesis; LPS lipid A biosynthesis. Functionally, condensation of UDP-2,3-diacylglucosamine and 2,3-diacylglucosamine-1-phosphate to form lipid A disaccharide, a precursor of lipid A, a phosphorylated glycolipid that anchors the lipopolysaccharide to the outer membrane of the cell. In Thiobacillus denitrificans (strain ATCC 25259 / T1), this protein is Lipid-A-disaccharide synthase.